Here is a 268-residue protein sequence, read N- to C-terminus: 4-hydroxy-tetrahydrodipicolinate reductase (268 aa).

NAD(+) contacts are provided by residues glycine 10–methionine 15, glutamate 36, glycine 99–threonine 101, and alanine 123–methionine 126. The active-site Proton donor/acceptor is histidine 156. Histidine 157 contributes to the (S)-2,3,4,5-tetrahydrodipicolinate binding site. The active-site Proton donor is lysine 160. Position 166–167 (glycine 166–threonine 167) interacts with (S)-2,3,4,5-tetrahydrodipicolinate.

This sequence belongs to the DapB family.

It is found in the cytoplasm. It carries out the reaction (S)-2,3,4,5-tetrahydrodipicolinate + NAD(+) + H2O = (2S,4S)-4-hydroxy-2,3,4,5-tetrahydrodipicolinate + NADH + H(+). The catalysed reaction is (S)-2,3,4,5-tetrahydrodipicolinate + NADP(+) + H2O = (2S,4S)-4-hydroxy-2,3,4,5-tetrahydrodipicolinate + NADPH + H(+). The protein operates within amino-acid biosynthesis; L-lysine biosynthesis via DAP pathway; (S)-tetrahydrodipicolinate from L-aspartate: step 4/4. In terms of biological role, catalyzes the conversion of 4-hydroxy-tetrahydrodipicolinate (HTPA) to tetrahydrodipicolinate. The protein is 4-hydroxy-tetrahydrodipicolinate reductase of Nitrosomonas eutropha (strain DSM 101675 / C91 / Nm57).